We begin with the raw amino-acid sequence, 568 residues long: MMRRLVSYFVRSRFSLHLSTTPPQRSALFSHILSSHLDSIQINKKISSFSVHRFCSTTLLNPELEITRIEKVSEDQSLVYCNENDIRTKGSNHAVGILHEAIMANLNAYDDMEKALDESSVDLTTPVVCKILQRLQYEEKTAFRFFTWAGHQEHYSHEPIAYNEMIDILSSTKYKNKQFRIVIDMLDYMKRNNKTVVLVDVLLEILRKYCERYLTHVQKFAKRKRIRVKTQPEINAFNMLLDALCKCGLVKEGEALLRRMRHRVKPDANTFNVLFFGWCRVRDPKKAMKLLEEMIEAGHKPENFTYCAAIDTFCQAGMVDEAADLFDFMITKGSAVSAPTAKTFALMIVALAKNDKAEECFELIGRMISTGCLPDVSTYKDVIEGMCMAEKVDEAYKFLDEMSNKGYPPDIVTYNCFLRVLCENRKTDEALKLYGRMVESRCAPSVQTYNMLISMFFEMDDPDGAFNTWTEMDKRDCVQDVETYCAMINGLFDCHRAKEACFLLEEVVNKGLKLPYRVFDSFLMRLSEVGNLKAIHKVSEHMKKFYNHSMARRFALSEKRKSTKLRGK.

The N-terminal 55 residues, 1 to 55, are a transit peptide targeting the mitochondrion; it reads MMRRLVSYFVRSRFSLHLSTTPPQRSALFSHILSSHLDSIQINKKISSFSVHRFC. 8 PPR repeats span residues 233–263, 267–301, 302–336, 340–374, 375–409, 410–444, 445–479, and 480–514; these read EINA…MRHR, DANT…GHKP, ENFT…GSAV, TAKT…GCLP, DVST…GYPP, DIVT…RCAP, SVQT…DCVQ, and DVET…GLKL.

It belongs to the PPR family. P subfamily.

The protein localises to the mitochondrion. The polypeptide is Pentatricopeptide repeat-containing protein At1g73400, mitochondrial (Arabidopsis thaliana (Mouse-ear cress)).